We begin with the raw amino-acid sequence, 36 residues long: Photosystem I reaction center subunit VIII (36 aa).

Residues 10–29 form a helical membrane-spanning segment; sequence FVPLVGLVFPAIAMASLFLY.

The protein belongs to the PsaI family.

It localises to the plastid. The protein resides in the chloroplast thylakoid membrane. In terms of biological role, may help in the organization of the PsaL subunit. The chain is Photosystem I reaction center subunit VIII from Oryza nivara (Indian wild rice).